The primary structure comprises 298 residues: H-2 class I histocompatibility antigen, alpha chain (298 aa).

Residues 1-244 (RYEPRARWIE…EPPSSTKTNT (244 aa)) lie on the Extracellular side of the membrane. An N-linked (GlcNAc...) asparagine glycan is attached at asparagine 43. Residues cysteine 58 and cysteine 121 are joined by a disulfide bond. N-linked (GlcNAc...) asparagine glycosylation occurs at asparagine 133. One can recognise an Ig-like C1-type domain in the interval 142-230 (PKAHVTHHRR…EGLPEPLTLR (89 aa)). A disulfide bridge connects residues cysteine 160 and cysteine 216. The chain crosses the membrane as a helical span at residues 245 to 265 (VIIAVPVVLGAVVILGAVMAF). Topologically, residues 266–298 (VMKRRRNTGGKGGDYALAPVSQSSDMSLPDCKV) are cytoplasmic. The interval 277 to 298 (GGDYALAPVSQSSDMSLPDCKV) is disordered. Phosphoserine is present on residues serine 289 and serine 292.

This sequence belongs to the MHC class I family. As to quaternary structure, heterodimer of an alpha chain and a beta chain (beta-2-microglobulin).

Its subcellular location is the membrane. Functionally, involved in the presentation of foreign antigens to the immune system. In Mus musculus (Mouse), this protein is H-2 class I histocompatibility antigen, alpha chain (H2-D1).